The chain runs to 447 residues: MSITKVPKKVVTLAYGCQMSERDADTLTEISSQKGYVRSQELEQADLIIVNTCCVRESAENKILGKIGELKHLKEANPQLKIAISGCMVQQPGALERLRKRAPHVDIWAGTHNIHEFQRLLEEAEEKGKVAEVWEKPRETQESVLLAAKGKLKAYVNISYGCNNFCTYCIVPHVRGRERSRQPEEILAEIRALVETGCREVTLLGQNVNSYGQDLDRAYDFADLLKDVDSIDGLWRVRFMTSHPKDLSDKLIETIAAGTHLCEHIHLPFQAGSDEILKGMNRKYTREYYLSRIAQIKVIIPQVSLTTDIIVGFPGETEEDFEQTLELIRQVRYSQAFTFMYSKRSGTPAAQMAEQIPLDIKKRRLQQLITVQNAQSLAWRQEMIGKTCEVLVEGPSKSNPDRLTGRTRGYELVVFPGEAQLIGTLVQVLIQDANSWTLFGECRADRH.

Residues 8-126 (KKVVTLAYGC…FQRLLEEAEE (119 aa)) form the MTTase N-terminal domain. Residues C17, C53, C87, C162, C166, and C169 each contribute to the [4Fe-4S] cluster site. The region spanning 148-378 (AKGKLKAYVN…ITVQNAQSLA (231 aa)) is the Radical SAM core domain. Residues 381–444 (QEMIGKTCEV…SWTLFGECRA (64 aa)) form the TRAM domain.

This sequence belongs to the methylthiotransferase family. MiaB subfamily. Monomer. It depends on [4Fe-4S] cluster as a cofactor.

Its subcellular location is the cytoplasm. The enzyme catalyses N(6)-dimethylallyladenosine(37) in tRNA + (sulfur carrier)-SH + AH2 + 2 S-adenosyl-L-methionine = 2-methylsulfanyl-N(6)-dimethylallyladenosine(37) in tRNA + (sulfur carrier)-H + 5'-deoxyadenosine + L-methionine + A + S-adenosyl-L-homocysteine + 2 H(+). In terms of biological role, catalyzes the methylthiolation of N6-(dimethylallyl)adenosine (i(6)A), leading to the formation of 2-methylthio-N6-(dimethylallyl)adenosine (ms(2)i(6)A) at position 37 in tRNAs that read codons beginning with uridine. The protein is tRNA-2-methylthio-N(6)-dimethylallyladenosine synthase of Desulfitobacterium hafniense (strain Y51).